We begin with the raw amino-acid sequence, 136 residues long: Secreted RxLR effector protein 63 (136 aa).

An N-terminal signal peptide occupies residues 1–21 (MQRFPYSLLLLLLSATNRSRR). Residues 43–46 (RMLR) carry the RxLR motif.

This sequence belongs to the RxLR effector family.

The protein localises to the secreted. It is found in the host nucleus. In terms of biological role, effector that partially suppresses the tobacco programmed cell death induced by cell death-inducing proteins. The chain is Secreted RxLR effector protein 63 from Plasmopara viticola (Downy mildew of grapevine).